The primary structure comprises 277 residues: MKFGKRLKKQVEESLPEWRDKFLAYKRLKKLVRLVSSSSGDVGGGGGGEAEFVRLLDGEVDRINAFFLEQEEEFVIRQRELQETVEKVAGGGGGGRRPAAAEMRRVRKEIVDLHGEMVLLLNYSAVNYTGLAKILKKYDKRTGRLLRLPFIEKVLRQPFFTTELISRLVRDCEATMEAIFTSSVATTAMAGDRRTWKGCSGDAGMAPMADQQGIFRNTVAALATMKELRSGSSTYGRFSLPPMAAPASPESDVLQSIRSDPHLKENGRIPSLQFFYA.

One can recognise an SPX domain in the interval 1–152 (MKFGKRLKKQ…GRLLRLPFIE (152 aa)).

The chain is SPX domain-containing protein 3 (SPX3) from Oryza sativa subsp. indica (Rice).